The sequence spans 120 residues: NAD(P)H-quinone oxidoreductase subunit 3, chloroplastic (120 aa).

A run of 3 helical transmembrane segments spans residues 9–29 (IFWA…LFSG), 64–84 (MFAL…PWAM), and 88–108 (ILGV…IVGL).

It belongs to the complex I subunit 3 family. As to quaternary structure, NDH is composed of at least 16 different subunits, 5 of which are encoded in the nucleus.

It localises to the plastid. The protein localises to the chloroplast thylakoid membrane. The catalysed reaction is a plastoquinone + NADH + (n+1) H(+)(in) = a plastoquinol + NAD(+) + n H(+)(out). It catalyses the reaction a plastoquinone + NADPH + (n+1) H(+)(in) = a plastoquinol + NADP(+) + n H(+)(out). Functionally, NDH shuttles electrons from NAD(P)H:plastoquinone, via FMN and iron-sulfur (Fe-S) centers, to quinones in the photosynthetic chain and possibly in a chloroplast respiratory chain. The immediate electron acceptor for the enzyme in this species is believed to be plastoquinone. Couples the redox reaction to proton translocation, and thus conserves the redox energy in a proton gradient. The protein is NAD(P)H-quinone oxidoreductase subunit 3, chloroplastic of Spinacia oleracea (Spinach).